The primary structure comprises 78 residues: Large ribosomal subunit protein bL31 (78 aa).

Zn(2+) contacts are provided by C16, C18, C38, and C41.

This sequence belongs to the bacterial ribosomal protein bL31 family. Type A subfamily. Part of the 50S ribosomal subunit. Requires Zn(2+) as cofactor.

Its function is as follows. Binds the 23S rRNA. The sequence is that of Large ribosomal subunit protein bL31 from Parafrankia sp. (strain EAN1pec).